The chain runs to 236 residues: MVSALILIQKATPETIVQFHDQLSNELPTLKGKWSFSFKIFRNNPYSIAPELAETSVTSSESKFLYTLAPSYLVGSCISLINKNSACVFSNVIEEESAEISNGSEFSIPDSHLHQGATTGLNDTFDFFVNQKMQSLWTQKQNIKGDGGQIYELENGSLIIRTSNVFLHGIFKGLLIQIEVENESSEHETSSLSEPFERVLSKYNIPRGKMSCNVLDSKLLDKYGDLCLQYSEILNF.

The protein belongs to the Mediator complex subunit 20 family. Component of the Mediator complex.

It is found in the nucleus. Functionally, component of the Mediator complex, a coactivator involved in the regulated transcription of nearly all RNA polymerase II-dependent genes. Mediator functions as a bridge to convey information from gene-specific regulatory proteins to the basal RNA polymerase II transcription machinery. Mediator is recruited to promoters by direct interactions with regulatory proteins and serves as a scaffold for the assembly of a functional preinitiation complex with RNA polymerase II and the general transcription factors. The sequence is that of Mediator of RNA polymerase II transcription subunit 20 (SRB2) from Debaryomyces hansenii (strain ATCC 36239 / CBS 767 / BCRC 21394 / JCM 1990 / NBRC 0083 / IGC 2968) (Yeast).